A 385-amino-acid polypeptide reads, in one-letter code: Zinc finger protein B385R (385 aa).

C2H2-type zinc fingers lie at residues 166–190 (LQCP…FYNH) and 168–190 (CPNC…FYNH).

It belongs to the asfivirus B385R family.

The sequence is that of Zinc finger protein B385R from African swine fever virus (isolate Tick/Malawi/Lil 20-1/1983) (ASFV).